Here is a 348-residue protein sequence, read N- to C-terminus: 4-hydroxy-3-methylbut-2-en-1-yl diphosphate synthase (flavodoxin) (348 aa).

Residues Cys-263, Cys-266, Cys-298, and Glu-305 each coordinate [4Fe-4S] cluster.

Belongs to the IspG family. Requires [4Fe-4S] cluster as cofactor.

The catalysed reaction is (2E)-4-hydroxy-3-methylbut-2-enyl diphosphate + oxidized [flavodoxin] + H2O + 2 H(+) = 2-C-methyl-D-erythritol 2,4-cyclic diphosphate + reduced [flavodoxin]. It functions in the pathway isoprenoid biosynthesis; isopentenyl diphosphate biosynthesis via DXP pathway; isopentenyl diphosphate from 1-deoxy-D-xylulose 5-phosphate: step 5/6. Its function is as follows. Converts 2C-methyl-D-erythritol 2,4-cyclodiphosphate (ME-2,4cPP) into 1-hydroxy-2-methyl-2-(E)-butenyl 4-diphosphate. The chain is 4-hydroxy-3-methylbut-2-en-1-yl diphosphate synthase (flavodoxin) from Dehalococcoides mccartyi (strain ATCC BAA-2100 / JCM 16839 / KCTC 5957 / BAV1).